A 216-amino-acid chain; its full sequence is DNA gyrase subunit B (216 aa).

The region spanning 140 to 216 (SELYLVEGDS…PDKLRYHKII (77 aa)) is the Toprim domain.

The protein belongs to the type II topoisomerase GyrB family. In terms of assembly, heterotetramer, composed of two GyrA and two GyrB chains. In the heterotetramer, GyrA contains the active site tyrosine that forms a transient covalent intermediate with DNA, while GyrB binds cofactors and catalyzes ATP hydrolysis.

The protein localises to the cytoplasm. The enzyme catalyses ATP-dependent breakage, passage and rejoining of double-stranded DNA.. A type II topoisomerase that negatively supercoils closed circular double-stranded (ds) DNA in an ATP-dependent manner to modulate DNA topology and maintain chromosomes in an underwound state. Negative supercoiling favors strand separation, and DNA replication, transcription, recombination and repair, all of which involve strand separation. Also able to catalyze the interconversion of other topological isomers of dsDNA rings, including catenanes and knotted rings. Type II topoisomerases break and join 2 DNA strands simultaneously in an ATP-dependent manner. This Acinetobacter bereziniae (Acinetobacter genomosp. 10) protein is DNA gyrase subunit B (gyrB).